The sequence spans 59 residues: Probable stress-associated endoplasmic reticulum protein (59 aa).

The interval 1 to 30 is disordered; it reads MSQSRTLRQKSQKYQENIEKRGVASPKKKE. Topologically, residues 1–34 are cytoplasmic; sequence MSQSRTLRQKSQKYQENIEKRGVASPKKKEDGLN. The span at 16–30 shows a compositional bias: basic and acidic residues; the sequence is ENIEKRGVASPKKKE. A helical; Anchor for type IV membrane protein membrane pass occupies residues 35–55; the sequence is INPYVLGFIIFVVVGSTLLQI. Residues 56 to 59 lie on the Extracellular side of the membrane; it reads LKGQ.

This sequence belongs to the RAMP4 family.

It is found in the membrane. The protein localises to the endoplasmic reticulum membrane. Its function is as follows. May interact with target proteins during translocation into the lumen of the endoplasmic reticulum. May protect unfolded target proteins against degradation and facilitate correct glycosylation. This is Probable stress-associated endoplasmic reticulum protein (serp) from Dictyostelium discoideum (Social amoeba).